The primary structure comprises 180 residues: Adenine phosphoribosyltransferase (180 aa).

The residue at position 2 (Ala-2) is an N-acetylalanine. Ser-4, Ser-15, and Ser-30 each carry phosphoserine. Residue Tyr-60 is modified to Phosphotyrosine. The residue at position 66 (Ser-66) is a Phosphoserine. Lys-114 bears the N6-acetyllysine mark. Thr-135 carries the post-translational modification Phosphothreonine.

Belongs to the purine/pyrimidine phosphoribosyltransferase family. In terms of assembly, homodimer.

The protein localises to the cytoplasm. It catalyses the reaction AMP + diphosphate = 5-phospho-alpha-D-ribose 1-diphosphate + adenine. The protein operates within purine metabolism; AMP biosynthesis via salvage pathway; AMP from adenine: step 1/1. Catalyzes a salvage reaction resulting in the formation of AMP, that is energically less costly than de novo synthesis. This is Adenine phosphoribosyltransferase from Cricetulus griseus (Chinese hamster).